The sequence spans 160 residues: Putative antiporter subunit mnhE2 (160 aa).

3 helical membrane-spanning segments follow: residues 22–42, 55–75, and 100–120; these read HFKF…IYIL, IWVA…SSIS, and SDWS…STVI.

The protein belongs to the CPA3 antiporters (TC 2.A.63) subunit E family. In terms of assembly, may form a heterooligomeric complex that consists of seven subunits: mnhA2, mnhB2, mnhC2, mnhD2, mnhE2, mnhF2 and mnhG2.

The protein resides in the cell membrane. This chain is Putative antiporter subunit mnhE2 (mnhE2), found in Staphylococcus aureus (strain USA300).